Here is a 323-residue protein sequence, read N- to C-terminus: Acetyl-coenzyme A carboxylase carboxyl transferase subunit alpha (323 aa).

In terms of domain architecture, CoA carboxyltransferase C-terminal spans 39-293; that stretch reads RLSKKSQQLT…RRALADSLRQ (255 aa).

Belongs to the AccA family. In terms of assembly, acetyl-CoA carboxylase is a heterohexamer composed of biotin carboxyl carrier protein (AccB), biotin carboxylase (AccC) and two subunits each of ACCase subunit alpha (AccA) and ACCase subunit beta (AccD).

The protein resides in the cytoplasm. It catalyses the reaction N(6)-carboxybiotinyl-L-lysyl-[protein] + acetyl-CoA = N(6)-biotinyl-L-lysyl-[protein] + malonyl-CoA. It participates in lipid metabolism; malonyl-CoA biosynthesis; malonyl-CoA from acetyl-CoA: step 1/1. Component of the acetyl coenzyme A carboxylase (ACC) complex. First, biotin carboxylase catalyzes the carboxylation of biotin on its carrier protein (BCCP) and then the CO(2) group is transferred by the carboxyltransferase to acetyl-CoA to form malonyl-CoA. This is Acetyl-coenzyme A carboxylase carboxyl transferase subunit alpha from Paraburkholderia phytofirmans (strain DSM 17436 / LMG 22146 / PsJN) (Burkholderia phytofirmans).